Here is a 61-residue protein sequence, read N- to C-terminus: Metallothionein-1F (61 aa).

The residue at position 1 (Met-1) is an N-acetylmethionine. The segment at 1-29 is beta; the sequence is MDPNCSCAAGVSCTCAGSCKCKECKCTSC. Residues Cys-5, Cys-7, Cys-13, Cys-15, Cys-19, Cys-21, Cys-24, Cys-26, Cys-29, Cys-33, Cys-34, Cys-36, Cys-37, Cys-41, Cys-44, Cys-48, Cys-50, and Cys-57 each coordinate a divalent metal cation. Residues 30–61 are alpha; sequence KKSCCSCCPVGCSKCAQGCVCKGASEKCSCCD. Ser-58 is subject to Phosphoserine. Residues Cys-59 and Cys-60 each contribute to the a divalent metal cation site.

This sequence belongs to the metallothionein superfamily. Type 1 family. Monomer.

Functionally, metallothioneins have a high content of cysteine residues that bind various heavy metals; these proteins are transcriptionally regulated by both heavy metals and glucocorticoids. In Homo sapiens (Human), this protein is Metallothionein-1F (MT1F).